Consider the following 57-residue polypeptide: Defensin-like protein 302 (57 aa).

3 disulfide bridges follow: cysteine 19-cysteine 39, cysteine 26-cysteine 44, and cysteine 32-cysteine 46.

The protein belongs to the DEFL family.

The polypeptide is Defensin-like protein 302 (Arabidopsis thaliana (Mouse-ear cress)).